A 155-amino-acid chain; its full sequence is MPKGTGKVIAQNKKAFHDYFIEETYEAGLVLQGTEIKSIRAGRVNLKDAFARVHNGEVWVHNMHINTYEQGNRFNHDPLRTRKLLLHKKEIDKLAGAAKETGYALVPLRIYLKNGFAKMALGLAKGKKQYDKRHDLKEKEAKREIARAFRDRQKM.

The protein belongs to the SmpB family.

The protein resides in the cytoplasm. In terms of biological role, required for rescue of stalled ribosomes mediated by trans-translation. Binds to transfer-messenger RNA (tmRNA), required for stable association of tmRNA with ribosomes. tmRNA and SmpB together mimic tRNA shape, replacing the anticodon stem-loop with SmpB. tmRNA is encoded by the ssrA gene; the 2 termini fold to resemble tRNA(Ala) and it encodes a 'tag peptide', a short internal open reading frame. During trans-translation Ala-aminoacylated tmRNA acts like a tRNA, entering the A-site of stalled ribosomes, displacing the stalled mRNA. The ribosome then switches to translate the ORF on the tmRNA; the nascent peptide is terminated with the 'tag peptide' encoded by the tmRNA and targeted for degradation. The ribosome is freed to recommence translation, which seems to be the essential function of trans-translation. The chain is SsrA-binding protein from Bacillus cereus (strain B4264).